Here is a 172-residue protein sequence, read N- to C-terminus: ATP synthase subunit b (172 aa).

The helical transmembrane segment at 27 to 47 (LAIVIFGLYKFLPPFVGGILE) threads the bilayer.

This sequence belongs to the ATPase B chain family. As to quaternary structure, F-type ATPases have 2 components, F(1) - the catalytic core - and F(0) - the membrane proton channel. F(1) has five subunits: alpha(3), beta(3), gamma(1), delta(1), epsilon(1). F(0) has four main subunits: a(1), b(1), b'(1) and c(10-14). The alpha and beta chains form an alternating ring which encloses part of the gamma chain. F(1) is attached to F(0) by a central stalk formed by the gamma and epsilon chains, while a peripheral stalk is formed by the delta, b and b' chains.

The protein localises to the cellular thylakoid membrane. F(1)F(0) ATP synthase produces ATP from ADP in the presence of a proton or sodium gradient. F-type ATPases consist of two structural domains, F(1) containing the extramembraneous catalytic core and F(0) containing the membrane proton channel, linked together by a central stalk and a peripheral stalk. During catalysis, ATP synthesis in the catalytic domain of F(1) is coupled via a rotary mechanism of the central stalk subunits to proton translocation. Its function is as follows. Component of the F(0) channel, it forms part of the peripheral stalk, linking F(1) to F(0). The chain is ATP synthase subunit b from Prochlorococcus marinus (strain MIT 9303).